Consider the following 581-residue polypeptide: Amino-acid acetyltransferase, mitochondrial (581 aa).

Residues 401–558 enclose the N-acetyltransferase domain; sequence FTLHNLIEDE…RIVGSEAVNI (158 aa).

Belongs to the acetyltransferase family.

The protein resides in the mitochondrion. It carries out the reaction L-glutamate + acetyl-CoA = N-acetyl-L-glutamate + CoA + H(+). Its pathway is amino-acid biosynthesis; L-arginine biosynthesis; N(2)-acetyl-L-ornithine from L-glutamate: step 1/4. N-acetylglutamate synthase involved in arginine biosynthesis. The polypeptide is Amino-acid acetyltransferase, mitochondrial (ARG2) (Scheffersomyces stipitis (strain ATCC 58785 / CBS 6054 / NBRC 10063 / NRRL Y-11545) (Yeast)).